The sequence spans 97 residues: Small ribosomal subunit protein bS20 (97 aa).

Belongs to the bacterial ribosomal protein bS20 family.

Binds directly to 16S ribosomal RNA. The sequence is that of Small ribosomal subunit protein bS20 from Prochlorococcus marinus (strain MIT 9515).